The sequence spans 37 residues: Small ribosomal subunit protein eS32 (37 aa).

The protein belongs to the eukaryotic ribosomal protein eS32 family. Part of the small ribosomal subunit.

The polypeptide is Small ribosomal subunit protein eS32 (Pyrococcus furiosus (strain ATCC 43587 / DSM 3638 / JCM 8422 / Vc1)).